A 291-amino-acid chain; its full sequence is 3-hydroxy-5-phosphonooxypentane-2,4-dione thiolase (291 aa).

The Schiff-base intermediate with substrate role is filled by lysine 203.

The protein belongs to the DeoC/FbaB aldolase family. As to quaternary structure, homodecamer.

The protein localises to the cytoplasm. The enzyme catalyses dihydroxyacetone phosphate + acetyl-CoA = 3-hydroxy-2,4-dioxopentyl phosphate + CoA. Functionally, involved in the degradation of phospho-AI-2, thereby terminating induction of the lsr operon and closing the AI-2 signaling cycle. Catalyzes the transfer of an acetyl moiety from 3-hydroxy-5-phosphonooxypentane-2,4-dione to CoA to form glycerone phosphate and acetyl-CoA. The sequence is that of 3-hydroxy-5-phosphonooxypentane-2,4-dione thiolase from Yersinia enterocolitica serotype O:8 / biotype 1B (strain NCTC 13174 / 8081).